Here is a 174-residue protein sequence, read N- to C-terminus: Heat shock protein 22 (174 aa).

A sHSP domain is found at 44-154; that stretch reads QIARWQEQEF…TLKEREVTIE (111 aa). Phosphothreonine is present on threonine 152. Positions 152-174 are disordered; the sequence is TIEQTGEPAKKSAEEPNDKAASQ. Positions 159–174 are enriched in basic and acidic residues; that stretch reads PAKKSAEEPNDKAASQ.

This sequence belongs to the small heat shock protein (HSP20) family.

This Drosophila melanogaster (Fruit fly) protein is Heat shock protein 22 (Hsp22).